The chain runs to 209 residues: Thiamine-phosphate synthase (209 aa).

4-amino-2-methyl-5-(diphosphooxymethyl)pyrimidine is bound by residues 39-43 and asparagine 71; that span reads QLREK. Mg(2+) contacts are provided by aspartate 72 and aspartate 91. Serine 110 contacts 4-amino-2-methyl-5-(diphosphooxymethyl)pyrimidine. 136–138 contacts 2-[(2R,5Z)-2-carboxy-4-methylthiazol-5(2H)-ylidene]ethyl phosphate; the sequence is TGT. Residue lysine 139 coordinates 4-amino-2-methyl-5-(diphosphooxymethyl)pyrimidine. Residues glycine 166 and 186 to 187 each bind 2-[(2R,5Z)-2-carboxy-4-methylthiazol-5(2H)-ylidene]ethyl phosphate; that span reads VS.

This sequence belongs to the thiamine-phosphate synthase family. Mg(2+) serves as cofactor.

The enzyme catalyses 2-[(2R,5Z)-2-carboxy-4-methylthiazol-5(2H)-ylidene]ethyl phosphate + 4-amino-2-methyl-5-(diphosphooxymethyl)pyrimidine + 2 H(+) = thiamine phosphate + CO2 + diphosphate. The catalysed reaction is 2-(2-carboxy-4-methylthiazol-5-yl)ethyl phosphate + 4-amino-2-methyl-5-(diphosphooxymethyl)pyrimidine + 2 H(+) = thiamine phosphate + CO2 + diphosphate. It catalyses the reaction 4-methyl-5-(2-phosphooxyethyl)-thiazole + 4-amino-2-methyl-5-(diphosphooxymethyl)pyrimidine + H(+) = thiamine phosphate + diphosphate. It participates in cofactor biosynthesis; thiamine diphosphate biosynthesis; thiamine phosphate from 4-amino-2-methyl-5-diphosphomethylpyrimidine and 4-methyl-5-(2-phosphoethyl)-thiazole: step 1/1. Its function is as follows. Condenses 4-methyl-5-(beta-hydroxyethyl)thiazole monophosphate (THZ-P) and 2-methyl-4-amino-5-hydroxymethyl pyrimidine pyrophosphate (HMP-PP) to form thiamine monophosphate (TMP). The polypeptide is Thiamine-phosphate synthase (Clostridium beijerinckii (strain ATCC 51743 / NCIMB 8052) (Clostridium acetobutylicum)).